We begin with the raw amino-acid sequence, 366 residues long: G-protein coupled receptor 183-B (366 aa).

Over 1–24 (MMSPDLDLNFSSNCNLYDHRPVAR) the chain is Extracellular. Asn-9 carries N-linked (GlcNAc...) asparagine glycosylation. The helical transmembrane segment at 25-50 (VLIPLVYSIICPVGLLGNALALHVVI) threads the bilayer. The Cytoplasmic portion of the chain corresponds to 51–70 (SSTTKINSITLYSANLAVSD). A helical transmembrane segment spans residues 71-88 (ILFCLSLPLRAVYYGLGF). Topologically, residues 89-98 (HWPMGEVLCK) are extracellular. The cysteines at positions 97 and 175 are disulfide-linked. A helical membrane pass occupies residues 99 to 120 (AIALLFYLNCYAGVNFMTCLAV). Over 121–142 (DRFVALVFPARLAKLRKAKNVR) the chain is Cytoplasmic. Residues 143–161 (FVCLAIWLLVLAQTLPLLT) traverse the membrane as a helical segment. Residues 162–187 (IGLTKTEPDSSITCMEYPNFEGVFKG) lie on the Extracellular side of the membrane. A helical membrane pass occupies residues 188–210 (LPYMLIVAVVLGFGIPVMTIIAC). The Cytoplasmic portion of the chain corresponds to 211 to 236 (YSILTHKLHQAAKSNQLTERSGKTKK). Residues 237–260 (ARGVIAGVVFVFVVCFSPYHIDIL) form a helical membrane-spanning segment. Residues 261 to 280 (QYMIRKLLYETDCKELQSFQ) lie on the Extracellular side of the membrane. The helical transmembrane segment at 281 to 305 (ISLHITVCLMNLNSCLDPFVYFFAC) threads the bilayer. Over 306–366 (KGYKQKVMRM…QQICYQPSAT (61 aa)) the chain is Cytoplasmic.

Belongs to the G-protein coupled receptor 1 family.

The protein resides in the cell membrane. Its function is as follows. Probable receptor for oxysterols that plays a central role during humoral immunity. Promotes activated B-cell localization in the outer follicle and interfollicular regions. This chain is G-protein coupled receptor 183-B (gpr183b), found in Danio rerio (Zebrafish).